The sequence spans 359 residues: Type-1 angiotensin II receptor (359 aa).

At 1-25 (MILNSSTEDGIKRIQDDCPKAGRHN) the chain is on the extracellular side. Residue asparagine 4 is glycosylated (N-linked (GlcNAc...) asparagine). Residues glutamine 15 and aspartate 17 each coordinate angiotensin II. 2 disulfide bridges follow: cysteine 18/cysteine 274 and cysteine 101/cysteine 180. A helical transmembrane segment spans residues 26-55 (YIFIMIPTLYSIIFVVGIFGNSLVVIVIYF). Residues 56–61 (YMKLKT) lie on the Cytoplasmic side of the membrane. The helical transmembrane segment at 62–89 (VASVFLLNLALADLCFLLTLPLWAVYTA) threads the bilayer. The Extracellular portion of the chain corresponds to 90–98 (MEYRWPFGN). A helical transmembrane segment spans residues 99 to 125 (YLCKIASASVSFNLYASVFLLTCLSID). Residues 126-141 (RYLAIVHPMKSRLRRT) are Cytoplasmic-facing. The chain crosses the membrane as a helical span at residues 142-165 (MLVAKVTCIIIWLLAGLASLPTII). The Extracellular portion of the chain corresponds to 166-190 (HRNVFFIENTNITVCAFHYESQNST). Arginine 167 serves as a coordination point for angiotensin II. An N-linked (GlcNAc...) asparagine glycan is attached at asparagine 176. The angiotensin II site is built by phenylalanine 182, histidine 183, and tyrosine 184. Asparagine 188 carries N-linked (GlcNAc...) asparagine glycosylation. Residues 191 to 216 (LPVGLGLTKNILGFLFPFLIILTSYT) traverse the membrane as a helical segment. Lysine 199 serves as a coordination point for angiotensin II. The Cytoplasmic segment spans residues 217-239 (LIWKTLKKAYEIQKNKPRKDDIF). Residues 240 to 268 (KIILAIVLFFFFSWVPHQIFTFMDVLIQL) form a helical membrane-spanning segment. At 269–278 (GLIRDCKIED) the chain is on the extracellular side. The chain crosses the membrane as a helical span at residues 279 to 304 (IVDTAMPITICLAYFNNCLNPLFYGF). Residues 305 to 359 (LGKKFKKYFLQLLKYIPPKAKSHSNLSTKMSTLSYRPSENGNSSTKKPAPCIEVE) lie on the Cytoplasmic side of the membrane. Positions 336 to 350 (TLSYRPSENGNSSTK) are enriched in polar residues. Residues 336 to 359 (TLSYRPSENGNSSTKKPAPCIEVE) are disordered. Cysteine 355 carries S-palmitoyl cysteine lipidation.

This sequence belongs to the G-protein coupled receptor 1 family. In terms of assembly, interacts with MAS1. Interacts with ARRB1. Interacts with FLNA (via filamin repeat 21); increases PKA-mediated phosphorylation of FLNA. Post-translationally, C-terminal Ser or Thr residues may be phosphorylated. As to expression, adrenal medulla, cortex and kidney.

The protein localises to the cell membrane. Functionally, receptor for angiotensin II, a vasoconstricting peptide, which acts as a key regulator of blood pressure and sodium retention by the kidney. The activated receptor in turn couples to G-alpha proteins G(q) (GNAQ, GNA11, GNA14 or GNA15) and thus activates phospholipase C and increases the cytosolic Ca(2+) concentrations, which in turn triggers cellular responses such as stimulation of protein kinase C. The polypeptide is Type-1 angiotensin II receptor (AGTR1) (Bos taurus (Bovine)).